The primary structure comprises 235 residues: Protein GrpE (235 aa).

Residues 1–18 show a composition bias toward polar residues; sequence MTDGNQKPDGNSGEQVTV. 2 disordered regions span residues 1–50 and 198–235; these read MTDG…DAAH and ESVDDGTAVADTAENDQADQGNSADTSGEQAESEPSGS. Basic and acidic residues predominate over residues 19-35; that stretch reads TDKRRIDPETGEVRHVP. A compositionally biased stretch (polar residues) spans 215 to 235; the sequence is ADQGNSADTSGEQAESEPSGS.

The protein belongs to the GrpE family. In terms of assembly, homodimer.

It is found in the cytoplasm. Participates actively in the response to hyperosmotic and heat shock by preventing the aggregation of stress-denatured proteins, in association with DnaK and GrpE. It is the nucleotide exchange factor for DnaK and may function as a thermosensor. Unfolded proteins bind initially to DnaJ; upon interaction with the DnaJ-bound protein, DnaK hydrolyzes its bound ATP, resulting in the formation of a stable complex. GrpE releases ADP from DnaK; ATP binding to DnaK triggers the release of the substrate protein, thus completing the reaction cycle. Several rounds of ATP-dependent interactions between DnaJ, DnaK and GrpE are required for fully efficient folding. This chain is Protein GrpE, found in Mycobacterium tuberculosis (strain ATCC 25177 / H37Ra).